The sequence spans 267 residues: Tryptophan synthase alpha chain (267 aa).

Residues Glu-44 and Asp-55 each act as proton acceptor in the active site.

Belongs to the TrpA family. Tetramer of two alpha and two beta chains.

The enzyme catalyses (1S,2R)-1-C-(indol-3-yl)glycerol 3-phosphate + L-serine = D-glyceraldehyde 3-phosphate + L-tryptophan + H2O. It functions in the pathway amino-acid biosynthesis; L-tryptophan biosynthesis; L-tryptophan from chorismate: step 5/5. In terms of biological role, the alpha subunit is responsible for the aldol cleavage of indoleglycerol phosphate to indole and glyceraldehyde 3-phosphate. This chain is Tryptophan synthase alpha chain, found in Coxiella burnetii (strain Dugway 5J108-111).